The chain runs to 349 residues: MPMPPDDSPLSLLPDHPLAAHNTFGIAATARYAARITHAAQFEALHRDPRVASLPQLVLGGGSNVVFTRDFDGVVLLDEIGGRRVVREDDDAWYVEAGGGEPWHAFVAWTLEQGMPGLENLALIPGTVGAAPIQNIGAYGLEMKAYFDSLIAVELATGRSERFDAARCAFGYRDSFFKRDGRGRFAIVAVTFRLPKRWTPRLGYADVTRELDARGIAPDAATPRDVFDAVVAIRRAKLPDPRVLGNAGSFFKNPVIDAAQFDALRARAPDVVSYPQPDGQVKLAAGWLIDQCGWKGRALGAAAVHERQALVLVNRGGATGVDVLALARAIQHDVRVRFGVELEPEPVCL.

The FAD-binding PCMH-type domain occupies 25–197; it reads GIAATARYAA…VAVTFRLPKR (173 aa). Arg-173 is a catalytic residue. Residue Ser-249 is the Proton donor of the active site. Residue Glu-345 is part of the active site.

It belongs to the MurB family. Requires FAD as cofactor.

The protein localises to the cytoplasm. The catalysed reaction is UDP-N-acetyl-alpha-D-muramate + NADP(+) = UDP-N-acetyl-3-O-(1-carboxyvinyl)-alpha-D-glucosamine + NADPH + H(+). The protein operates within cell wall biogenesis; peptidoglycan biosynthesis. Cell wall formation. This is UDP-N-acetylenolpyruvoylglucosamine reductase from Burkholderia vietnamiensis (strain G4 / LMG 22486) (Burkholderia cepacia (strain R1808)).